A 473-amino-acid polypeptide reads, in one-letter code: Photosystem II CP43 reaction center protein (473 aa).

The propeptide occupies 1-14 (MKTLYSLRRFYPVE). Thr-15 is modified (N-acetylthreonine). Thr-15 carries the phosphothreonine modification. The next 5 membrane-spanning stretches (helical) occupy residues 69–93 (LFEV…PHLA), 134–155 (LLGP…KDRN), 178–200 (KALY…RKIT), 255–275 (KPFA…LSYS), and 291–312 (WFNN…ASQA). Glu-367 contributes to the [CaMn4O5] cluster binding site. Positions 426–473 (LSTSHFVLGFFLFVGHLWHAGRARAAAAGFEKGIDRDFEPVLSMTPLN) are excised as a propeptide. The helical transmembrane segment at 447 to 471 (RARAAAAGFEKGIDRDFEPVLSMTP) threads the bilayer.

It belongs to the PsbB/PsbC family. PsbC subfamily. PSII is composed of 1 copy each of membrane proteins PsbA, PsbB, PsbC, PsbD, PsbE, PsbF, PsbH, PsbI, PsbJ, PsbK, PsbL, PsbM, PsbT, PsbX, PsbY, PsbZ, Psb30/Ycf12, at least 3 peripheral proteins of the oxygen-evolving complex and a large number of cofactors. It forms dimeric complexes. Requires Binds multiple chlorophylls and provides some of the ligands for the Ca-4Mn-5O cluster of the oxygen-evolving complex. It may also provide a ligand for a Cl- that is required for oxygen evolution. PSII binds additional chlorophylls, carotenoids and specific lipids. as cofactor. In terms of processing, over time a tryptophan in the fifth lumenal loop is converted to 2-hydroxy-2,3-dihydrotryptophan, 2-oxo-2,3-dihydrotryptophan, and kynurenine by oxidizing species from the active site. This oxidation targets the protein for turnover.

The protein resides in the plastid. Its subcellular location is the chloroplast thylakoid membrane. Its function is as follows. One of the components of the core complex of photosystem II (PSII). It binds chlorophyll and helps catalyze the primary light-induced photochemical processes of PSII. PSII is a light-driven water:plastoquinone oxidoreductase, using light energy to abstract electrons from H(2)O, generating O(2) and a proton gradient subsequently used for ATP formation. The protein is Photosystem II CP43 reaction center protein of Spinacia oleracea (Spinach).